The primary structure comprises 633 residues: Chaperone protein dnaK2 (633 aa).

Thr-197 is subject to Phosphothreonine; by autocatalysis. The tract at residues 600 to 633 (SNAASQAADGTSSESNNSTEGNDDVIDAEFTESK) is disordered. Residues 608 to 619 (DGTSSESNNSTE) show a composition bias toward low complexity. Over residues 620-633 (GNDDVIDAEFTESK) the composition is skewed to acidic residues.

This sequence belongs to the heat shock protein 70 family.

Its function is as follows. Acts as a chaperone. The polypeptide is Chaperone protein dnaK2 (dnaK2) (Prochlorococcus marinus (strain SARG / CCMP1375 / SS120)).